The primary structure comprises 95 residues: Large ribosomal subunit protein bL25 (95 aa).

Belongs to the bacterial ribosomal protein bL25 family. In terms of assembly, part of the 50S ribosomal subunit; part of the 5S rRNA/L5/L18/L25 subcomplex. Contacts the 5S rRNA. Binds to the 5S rRNA independently of L5 and L18.

In terms of biological role, this is one of the proteins that binds to the 5S RNA in the ribosome where it forms part of the central protuberance. The sequence is that of Large ribosomal subunit protein bL25 from Glaesserella parasuis serovar 5 (strain SH0165) (Haemophilus parasuis).